The following is an 84-amino-acid chain: U4-theraphotoxin-Hhn1n (84 aa).

The first 22 residues, 1-22 (MKVTLIAILTCAAVLVLHTTAA), serve as a signal peptide directing secretion. A propeptide spanning residues 23 to 47 (EELEESQLMEVGMPDTELAAVDEER) is cleaved from the precursor. 3 cysteine pairs are disulfide-bonded: Cys-51/Cys-65, Cys-55/Cys-76, and Cys-70/Cys-81.

This sequence belongs to the neurotoxin 12 (Hwtx-2) family. 02 (Hwtx-2) subfamily. In terms of tissue distribution, expressed by the venom gland.

It is found in the secreted. Its function is as follows. Postsynaptic neurotoxin. In Cyriopagopus hainanus (Chinese bird spider), this protein is U4-theraphotoxin-Hhn1n.